The primary structure comprises 637 residues: CREB-regulated transcription coactivator 3 (637 aa).

Serine 66 carries the phosphoserine modification. The segment covering 105 to 115 has biased composition (basic residues); the sequence is NRLHSSHHRPI. Disordered stretches follow at residues 105–184 and 269–288; these read NRLH…SLQD and HFPS…YANI. Position 133 is a phosphoserine (serine 133). Threonine 143 bears the Phosphothreonine mark. Serine 145 carries the phosphoserine; by SIK2 modification. Residues 145-159 show a composition bias toward polar residues; it reads SDSALHTSASSTKSQ. Residue threonine 151 is modified to Phosphothreonine. Position 293 is a phosphoserine (serine 293). The segment at 299–462 is disordered; that stretch reads AMTHLGISGS…QNYQPPSPVP (164 aa). A compositionally biased stretch (polar residues) spans 309–337; sequence PGMQNTRSNPSIQATMNNNSLASNVNSHT. Over residues 344 to 365 the composition is skewed to low complexity; sequence PALHPSLRLSSLSNPSLPTSAL. Phosphoserine is present on residues serine 377 and serine 396. Residues 377–395 show a composition bias toward polar residues; that stretch reads SPLTLTPGSESNRSISNQF. Residues 396–407 show a composition bias toward low complexity; sequence SPTSPMNMPPNS. The segment covering 418–429 has biased composition (pro residues); it reads SLPPLEPPPPYP. The span at 430 to 447 shows a compositional bias: low complexity; the sequence is LYSDQPQPHLHHTQQQMH. Phosphoserine is present on serine 561. The tract at residues 615–637 is disordered; sequence MLSDPDMVLPDPSIEDSFRSDKL.

Belongs to the TORC family. Binding, as a tetramer, through its N-terminal region, with the bZIP domain of creb1 enhances recruitment of taf4 to the promoter. 'Arg-300' in the bZIP domain of creb1 is essential for this interaction.

The protein localises to the nucleus. The protein resides in the cytoplasm. Transcriptional coactivator for creb1 which activates transcription through both consensus and variant cAMP response element (CRE) sites. Acts as a coactivator, in the SIK/TORC signaling pathway, being active when dephosphorylated and acts independently of creb1 'Ser-119' phosphorylation. Enhances the interaction of creb1 with taf4. Regulates the expression of specific CREB-activated genes such as the steroidogenic gene, StAR. Potent coactivator of ppargc1a and inducer of mitochondrial biogenesis in muscle cells. This is CREB-regulated transcription coactivator 3 (crtc3) from Xenopus tropicalis (Western clawed frog).